The primary structure comprises 29 residues: Omega-conotoxins GVIIA/GVIIB (29 aa).

3 disulfide bridges follow: cysteine 1/cysteine 16, cysteine 8/cysteine 19, and cysteine 15/cysteine 26. 2 positions are modified to 4-hydroxyproline: proline 4 and proline 7.

In terms of tissue distribution, expressed by the venom duct.

The protein localises to the secreted. In terms of biological role, omega-conotoxins act at presynaptic membranes, they bind and block voltage-gated calcium channels (Cav). This is Omega-conotoxins GVIIA/GVIIB from Conus geographus (Geography cone).